Reading from the N-terminus, the 578-residue chain is Asparagine synthetase [glutamine-hydrolyzing] 3 (578 aa).

Cysteine 2 acts as the For GATase activity in catalysis. Residues 2 to 185 (CGILAVLGCV…PGHIYSSKQG (184 aa)) form the Glutamine amidotransferase type-2 domain. Residues 50–54 (RLAIV), 75–77 (NGE), and aspartate 98 contribute to the L-glutamine site. The Asparagine synthetase domain maps to 210–450 (VRNTFEKAVI…LPKHILYRQK (241 aa)). ATP is bound by residues leucine 231, isoleucine 267, and 341-342 (SG). Positions 555 to 572 (GEDKTEDSRPEKLQKLAE) are enriched in basic and acidic residues. A disordered region spans residues 555-578 (GEDKTEDSRPEKLQKLAEKTPAIV).

It carries out the reaction L-aspartate + L-glutamine + ATP + H2O = L-asparagine + L-glutamate + AMP + diphosphate + H(+). It functions in the pathway amino-acid biosynthesis; L-asparagine biosynthesis. In terms of biological role, essential for nitrogen assimilation, distribution and remobilization within the plant via the phloem. The polypeptide is Asparagine synthetase [glutamine-hydrolyzing] 3 (ASN3) (Arabidopsis thaliana (Mouse-ear cress)).